We begin with the raw amino-acid sequence, 470 residues long: Uronate isomerase (470 aa).

The protein belongs to the metallo-dependent hydrolases superfamily. Uronate isomerase family.

It carries out the reaction D-glucuronate = D-fructuronate. It catalyses the reaction aldehydo-D-galacturonate = keto-D-tagaturonate. It participates in carbohydrate metabolism; pentose and glucuronate interconversion. The polypeptide is Uronate isomerase (Salmonella paratyphi A (strain ATCC 9150 / SARB42)).